The primary structure comprises 334 residues: Holliday junction branch migration complex subunit RuvB (334 aa).

Residues 4–186 (ADRLIAPENP…FGITQRLEYY (183 aa)) are large ATPase domain (RuvB-L). Residues isoleucine 25, arginine 26, glycine 67, lysine 70, threonine 71, threonine 72, 133-135 (EDY), arginine 176, tyrosine 186, and arginine 223 each bind ATP. Threonine 71 provides a ligand contact to Mg(2+). Positions 187 to 257 (KVKDLQDIVQ…TADKALNMLD (71 aa)) are small ATPAse domain (RuvB-S). The interval 260 to 334 (AEGFDYMDRK…RAYLHFGIEK (75 aa)) is head domain (RuvB-H). DNA contacts are provided by arginine 315 and arginine 320.

It belongs to the RuvB family. As to quaternary structure, homohexamer. Forms an RuvA(8)-RuvB(12)-Holliday junction (HJ) complex. HJ DNA is sandwiched between 2 RuvA tetramers; dsDNA enters through RuvA and exits via RuvB. An RuvB hexamer assembles on each DNA strand where it exits the tetramer. Each RuvB hexamer is contacted by two RuvA subunits (via domain III) on 2 adjacent RuvB subunits; this complex drives branch migration. In the full resolvosome a probable DNA-RuvA(4)-RuvB(12)-RuvC(2) complex forms which resolves the HJ.

Its subcellular location is the cytoplasm. It catalyses the reaction ATP + H2O = ADP + phosphate + H(+). In terms of biological role, the RuvA-RuvB-RuvC complex processes Holliday junction (HJ) DNA during genetic recombination and DNA repair, while the RuvA-RuvB complex plays an important role in the rescue of blocked DNA replication forks via replication fork reversal (RFR). RuvA specifically binds to HJ cruciform DNA, conferring on it an open structure. The RuvB hexamer acts as an ATP-dependent pump, pulling dsDNA into and through the RuvAB complex. RuvB forms 2 homohexamers on either side of HJ DNA bound by 1 or 2 RuvA tetramers; 4 subunits per hexamer contact DNA at a time. Coordinated motions by a converter formed by DNA-disengaged RuvB subunits stimulates ATP hydrolysis and nucleotide exchange. Immobilization of the converter enables RuvB to convert the ATP-contained energy into a lever motion, pulling 2 nucleotides of DNA out of the RuvA tetramer per ATP hydrolyzed, thus driving DNA branch migration. The RuvB motors rotate together with the DNA substrate, which together with the progressing nucleotide cycle form the mechanistic basis for DNA recombination by continuous HJ branch migration. Branch migration allows RuvC to scan DNA until it finds its consensus sequence, where it cleaves and resolves cruciform DNA. The sequence is that of Holliday junction branch migration complex subunit RuvB from Vibrio campbellii (strain ATCC BAA-1116).